Reading from the N-terminus, the 349-residue chain is UDP-3-O-acylglucosamine N-acyltransferase 1 (349 aa).

The active-site Proton acceptor is the histidine 241.

The protein belongs to the transferase hexapeptide repeat family. LpxD subfamily. As to quaternary structure, homotrimer.

The enzyme catalyses a UDP-3-O-[(3R)-3-hydroxyacyl]-alpha-D-glucosamine + a (3R)-hydroxyacyl-[ACP] = a UDP-2-N,3-O-bis[(3R)-3-hydroxyacyl]-alpha-D-glucosamine + holo-[ACP] + H(+). It participates in bacterial outer membrane biogenesis; LPS lipid A biosynthesis. In terms of biological role, catalyzes the N-acylation of UDP-3-O-acylglucosamine using 3-hydroxyacyl-ACP as the acyl donor. Is involved in the biosynthesis of lipid A, a phosphorylated glycolipid that anchors the lipopolysaccharide to the outer membrane of the cell. This is UDP-3-O-acylglucosamine N-acyltransferase 1 from Gloeobacter violaceus (strain ATCC 29082 / PCC 7421).